A 414-amino-acid chain; its full sequence is Serine/threonine transporter SstT (414 aa).

Topologically, residues 2–15 (TTQRSPGLFRRLAH) are cytoplasmic. The helical transmembrane segment at 16 to 36 (GSLVKQILVGLVLGILLAWIS) threads the bilayer. At 37–45 (KPAAEAVGL) the chain is on the periplasmic side. Residues 46–66 (LGTLFVGALKAVAPILVLMLV) form a helical membrane-spanning segment. Residues 67-83 (MASIANHQHGQKTNILP) lie on the Cytoplasmic side of the membrane. Residues 84–104 (ILFLYLLGTFSAALAAVVFSF) traverse the membrane as a helical segment. Over 105–142 (AFPSTLHLSSSAGDISPPSGIVEVMRGLVMSMVSNPID) the chain is Periplasmic. A helical transmembrane segment spans residues 143–163 (ALLKGNYIGILVWAIGLGFAL). Residues 164–179 (RHGNETTKNLVNDMSN) are Cytoplasmic-facing. The helical transmembrane segment at 180-200 (AVTFMVKLVIRFAPIGIFGLV) threads the bilayer. The Periplasmic segment spans residues 201 to 217 (SSTLATTGFSTLWGYAQ). A helical transmembrane segment spans residues 218-238 (LLVVLVGCMLLVALVVNPLLV). Residues 239-299 (WWKIRRNPFP…VSIPLGATIN (61 aa)) are Cytoplasmic-facing. A helical membrane pass occupies residues 300 to 320 (MAGAAITITVLTLAAVNTLGI). Over 321-331 (PVDLPTALLLS) the chain is Periplasmic. The helical transmembrane segment at 332-352 (VVASLCACGASGVAGGSLLLI) threads the bilayer. The Cytoplasmic portion of the chain corresponds to 353–414 (PLACNMFGIS…DRLANSALRN (62 aa)).

Belongs to the dicarboxylate/amino acid:cation symporter (DAACS) (TC 2.A.23) family.

It is found in the cell inner membrane. The enzyme catalyses L-serine(in) + Na(+)(in) = L-serine(out) + Na(+)(out). The catalysed reaction is L-threonine(in) + Na(+)(in) = L-threonine(out) + Na(+)(out). Involved in the import of serine and threonine into the cell, with the concomitant import of sodium (symport system). The protein is Serine/threonine transporter SstT of Shigella dysenteriae serotype 1 (strain Sd197).